The chain runs to 141 residues: Large-conductance mechanosensitive channel (141 aa).

A run of 2 helical transmembrane segments spans residues 16-36 (VVDL…VSSM) and 83-103 (GNFI…FLMV).

This sequence belongs to the MscL family. Homopentamer.

Its subcellular location is the cell inner membrane. Channel that opens in response to stretch forces in the membrane lipid bilayer. May participate in the regulation of osmotic pressure changes within the cell. The polypeptide is Large-conductance mechanosensitive channel (Cytophaga hutchinsonii (strain ATCC 33406 / DSM 1761 / CIP 103989 / NBRC 15051 / NCIMB 9469 / D465)).